Consider the following 446-residue polypeptide: Phosphoglucosamine mutase (446 aa).

The active-site Phosphoserine intermediate is serine 102. The Mg(2+) site is built by serine 102, aspartate 241, aspartate 243, and aspartate 245. At serine 102 the chain carries Phosphoserine.

Belongs to the phosphohexose mutase family. It depends on Mg(2+) as a cofactor. Post-translationally, activated by phosphorylation.

It carries out the reaction alpha-D-glucosamine 1-phosphate = D-glucosamine 6-phosphate. Its function is as follows. Catalyzes the conversion of glucosamine-6-phosphate to glucosamine-1-phosphate. In Yersinia enterocolitica serotype O:8 / biotype 1B (strain NCTC 13174 / 8081), this protein is Phosphoglucosamine mutase.